Here is a 952-residue protein sequence, read N- to C-terminus: DNA topoisomerase 1 (952 aa).

In terms of domain architecture, Toprim spans 12 to 135; the sequence is RRLVIVESPA…VKRMVFHEIT (124 aa). Residues Glu18 and Asp104 each coordinate Mg(2+). Residues 150–602 enclose the Topo IA-type catalytic domain; that stretch reads NQKLVDAQET…RFYFGEGDGT (453 aa). The segment at 184–189 is interaction with DNA; it reads SAGRVQ. Catalysis depends on Tyr334, which acts as the O-(5'-phospho-DNA)-tyrosine intermediate. Residues 847 to 952 are disordered; sequence RFGPYVTDGE…KATASKTSED (106 aa). Residues 871 to 884 are compositionally biased toward basic and acidic residues; that stretch reads TPERGYELLAEKRA. Positions 885 to 906 are enriched in basic residues; that stretch reads KGPAKKTAKKAVKKTAAKKAPA. Composition is skewed to low complexity over residues 907–930 and 937–952; these read KKAA…AAKS and AKTA…TSED.

The protein belongs to the type IA topoisomerase family. Monomer. It depends on Mg(2+) as a cofactor.

The enzyme catalyses ATP-independent breakage of single-stranded DNA, followed by passage and rejoining.. Its function is as follows. Releases the supercoiling and torsional tension of DNA, which is introduced during the DNA replication and transcription, by transiently cleaving and rejoining one strand of the DNA duplex. Introduces a single-strand break via transesterification at a target site in duplex DNA. The scissile phosphodiester is attacked by the catalytic tyrosine of the enzyme, resulting in the formation of a DNA-(5'-phosphotyrosyl)-enzyme intermediate and the expulsion of a 3'-OH DNA strand. The free DNA strand then undergoes passage around the unbroken strand, thus removing DNA supercoils. Finally, in the religation step, the DNA 3'-OH attacks the covalent intermediate to expel the active-site tyrosine and restore the DNA phosphodiester backbone. Relaxes supercoiled plasmid in vitro; in the presence of sIHF (integration host factor) relaxation is decreased. This chain is DNA topoisomerase 1, found in Streptomyces coelicolor (strain ATCC BAA-471 / A3(2) / M145).